The sequence spans 207 residues: Probable GTP-binding protein EngB (207 aa).

One can recognise an EngB-type G domain in the interval 25-202; the sequence is DVPEIAFVGR…ATLLWQWAHP (178 aa). Residues 33-40, 60-64, 82-85, 152-155, and 181-183 each bind GTP; these read GRSNAGKS, GRTQH, DLPG, TKAD, and FSA. Residues serine 40 and threonine 62 each coordinate Mg(2+).

It belongs to the TRAFAC class TrmE-Era-EngA-EngB-Septin-like GTPase superfamily. EngB GTPase family. It depends on Mg(2+) as a cofactor.

Functionally, necessary for normal cell division and for the maintenance of normal septation. This chain is Probable GTP-binding protein EngB, found in Albidiferax ferrireducens (strain ATCC BAA-621 / DSM 15236 / T118) (Rhodoferax ferrireducens).